A 149-amino-acid chain; its full sequence is D-aminoacyl-tRNA deacylase (149 aa).

Positions 139–140 (GP) match the Gly-cisPro motif, important for rejection of L-amino acids motif.

This sequence belongs to the DTD family. In terms of assembly, homodimer.

The protein localises to the cytoplasm. The enzyme catalyses glycyl-tRNA(Ala) + H2O = tRNA(Ala) + glycine + H(+). It carries out the reaction a D-aminoacyl-tRNA + H2O = a tRNA + a D-alpha-amino acid + H(+). Functionally, an aminoacyl-tRNA editing enzyme that deacylates mischarged D-aminoacyl-tRNAs. Also deacylates mischarged glycyl-tRNA(Ala), protecting cells against glycine mischarging by AlaRS. Acts via tRNA-based rather than protein-based catalysis; rejects L-amino acids rather than detecting D-amino acids in the active site. By recycling D-aminoacyl-tRNA to D-amino acids and free tRNA molecules, this enzyme counteracts the toxicity associated with the formation of D-aminoacyl-tRNA entities in vivo and helps enforce protein L-homochirality. This Schizosaccharomyces pombe (strain 972 / ATCC 24843) (Fission yeast) protein is D-aminoacyl-tRNA deacylase (dtd1).